The primary structure comprises 187 residues: Ribosome maturation factor RimP (187 aa).

Belongs to the RimP family.

The protein resides in the cytoplasm. Its function is as follows. Required for maturation of 30S ribosomal subunits. The chain is Ribosome maturation factor RimP from Phenylobacterium zucineum (strain HLK1).